A 126-amino-acid polypeptide reads, in one-letter code: Ribonuclease VapC23 (126 aa).

The 117-residue stretch at 2-118 (IFVDTNVFMY…GVTRIKTFDH (117 aa)) folds into the PINc domain. The Mg(2+) site is built by Asp-5 and Asp-98.

It belongs to the PINc/VapC protein family. It depends on Mg(2+) as a cofactor.

Its function is as follows. Toxic component of a type II toxin-antitoxin (TA) system. An RNase. The cognate antitoxin is VapB23. This is Ribonuclease VapC23 from Mycobacterium tuberculosis (strain CDC 1551 / Oshkosh).